The sequence spans 123 residues: Ribosome-binding factor A (123 aa).

This sequence belongs to the RbfA family. Monomer. Binds 30S ribosomal subunits, but not 50S ribosomal subunits or 70S ribosomes.

It localises to the cytoplasm. Its function is as follows. One of several proteins that assist in the late maturation steps of the functional core of the 30S ribosomal subunit. Associates with free 30S ribosomal subunits (but not with 30S subunits that are part of 70S ribosomes or polysomes). Required for efficient processing of 16S rRNA. May interact with the 5'-terminal helix region of 16S rRNA. This chain is Ribosome-binding factor A, found in Lactobacillus gasseri (strain ATCC 33323 / DSM 20243 / BCRC 14619 / CIP 102991 / JCM 1131 / KCTC 3163 / NCIMB 11718 / NCTC 13722 / AM63).